The following is a 363-amino-acid chain: 3-isopropylmalate dehydrogenase (363 aa).

78–91 (GPKWEHLPPDQQPE) contributes to the NAD(+) binding site. The substrate site is built by Arg99, Arg109, Arg138, and Asp227. Positions 227, 251, and 255 each coordinate Mg(2+). 285 to 297 (GSAPDITGKNIAN) serves as a coordination point for NAD(+).

It belongs to the isocitrate and isopropylmalate dehydrogenases family. LeuB type 1 subfamily. In terms of assembly, homodimer. The cofactor is Mg(2+). Mn(2+) is required as a cofactor.

The protein localises to the cytoplasm. The catalysed reaction is (2R,3S)-3-isopropylmalate + NAD(+) = 4-methyl-2-oxopentanoate + CO2 + NADH. It participates in amino-acid biosynthesis; L-leucine biosynthesis; L-leucine from 3-methyl-2-oxobutanoate: step 3/4. Its function is as follows. Catalyzes the oxidation of 3-carboxy-2-hydroxy-4-methylpentanoate (3-isopropylmalate) to 3-carboxy-4-methyl-2-oxopentanoate. The product decarboxylates to 4-methyl-2 oxopentanoate. This is 3-isopropylmalate dehydrogenase from Shigella boydii serotype 4 (strain Sb227).